The sequence spans 757 residues: Protein transport protein SEC23-2 (757 aa).

The Zn(2+) site is built by cysteine 56, cysteine 61, cysteine 80, and cysteine 83.

It belongs to the SEC23/SEC24 family. SEC23 subfamily. As to quaternary structure, the COPII coat is composed of at least 5 proteins: the SEC23/24 complex, the SEC13/31 complex, and the protein SAR1.

The protein localises to the cytoplasm. It localises to the cytoplasmic vesicle. Its subcellular location is the COPII-coated vesicle membrane. It is found in the endoplasmic reticulum membrane. The protein resides in the golgi apparatus membrane. Its function is as follows. Component of the coat protein complex II (COPII) which promotes the formation of transport vesicles from the endoplasmic reticulum (ER). The coat has two main functions, the physical deformation of the endoplasmic reticulum membrane into vesicles and the selection of cargo molecules. The sequence is that of Protein transport protein SEC23-2 (SEC232) from Candida glabrata (strain ATCC 2001 / BCRC 20586 / JCM 3761 / NBRC 0622 / NRRL Y-65 / CBS 138) (Yeast).